We begin with the raw amino-acid sequence, 892 residues long: Translation initiation factor IF-2 (892 aa).

A disordered region spans residues 88–304; it reads KKRTFVKRDP…SSLQQGFQKP (217 aa). Composition is skewed to basic and acidic residues over residues 93–159 and 166–216; these read VKRD…KDKV and DMTK…EENK. Over residues 254 to 269 the composition is skewed to basic residues; it reads GRGRNAKAARPAKKGK. Residues 270–282 are compositionally biased toward basic and acidic residues; the sequence is HAESKADREEARA. The region spanning 391–560 is the tr-type G domain; sequence PRAPVVTIMG…LLQAEVLELK (170 aa). Residues 400-407 are G1; sequence GHVDHGKT. 400–407 is a binding site for GTP; the sequence is GHVDHGKT. The segment at 425–429 is G2; that stretch reads GITQH. Residues 446 to 449 are G3; it reads DTPG. GTP contacts are provided by residues 446 to 450 and 500 to 503; these read DTPGH and NKID. Positions 500–503 are G4; that stretch reads NKID. Residues 536-538 form a G5 region; it reads SAK.

Belongs to the TRAFAC class translation factor GTPase superfamily. Classic translation factor GTPase family. IF-2 subfamily.

It localises to the cytoplasm. Its function is as follows. One of the essential components for the initiation of protein synthesis. Protects formylmethionyl-tRNA from spontaneous hydrolysis and promotes its binding to the 30S ribosomal subunits. Also involved in the hydrolysis of GTP during the formation of the 70S ribosomal complex. This chain is Translation initiation factor IF-2, found in Salmonella choleraesuis (strain SC-B67).